Here is a 275-residue protein sequence, read N- to C-terminus: Octanoyl-[GcvH]:protein N-octanoyltransferase (275 aa).

One can recognise a BPL/LPL catalytic domain in the interval 42–246 (GQSQPVVRLW…ALQAFGSRLE (205 aa)). The Acyl-thioester intermediate role is filled by cysteine 145.

It belongs to the octanoyltransferase LipL family.

The enzyme catalyses N(6)-octanoyl-L-lysyl-[glycine-cleavage complex H protein] + L-lysyl-[lipoyl-carrier protein] = N(6)-octanoyl-L-lysyl-[lipoyl-carrier protein] + L-lysyl-[glycine-cleavage complex H protein]. The protein operates within protein modification; protein lipoylation via endogenous pathway; protein N(6)-(lipoyl)lysine from octanoyl-[acyl-carrier-protein]. Its function is as follows. Catalyzes the amidotransfer (transamidation) of the octanoyl moiety from octanoyl-GcvH to the lipoyl domain of the E2 subunit of lipoate-dependent enzymes. This Anoxybacillus flavithermus (strain DSM 21510 / WK1) protein is Octanoyl-[GcvH]:protein N-octanoyltransferase.